Here is a 96-residue protein sequence, read N- to C-terminus: Redox-responsive transcriptional regulator WhiB3 (96 aa).

Residues L22–L86 form the 4Fe-4S Wbl-type domain. [4Fe-4S] cluster is bound by residues C23, C53, C56, and C62.

Belongs to the WhiB family. It depends on [4Fe-4S] cluster as a cofactor. In terms of processing, the Fe-S cluster can be nitrosylated by nitric oxide (NO). Upon Fe-S cluster removal intramolecular disulfide bonds are formed.

It localises to the cytoplasm. Functionally, a redox-sensitive transcriptional regulator. Maintains intracellular redox homeostasis by regulating catabolic metabolism and polyketide biosynthesis. Regulates expression of the redox buffer ergothioneine (ERG). In concert with myothiol (MSH), another redox buffer, responds to low pH leading to acid resistance. The apo- but not holo-form probably binds DNA. In Mycolicibacterium smegmatis (strain ATCC 700084 / mc(2)155) (Mycobacterium smegmatis), this protein is Redox-responsive transcriptional regulator WhiB3 (whiB3).